Consider the following 382-residue polypeptide: uncharacterized protein (382 aa).

12 helical membrane passes run 8–28 (VMLLLCGLLLLTLAIAVLNTL), 45–65 (MVSSSYFTGNLVGTLFTGYLI), 75–95 (YLASLIFAAGCVGLGVMVGFW), 102–122 (FIAGIGCAMIWVVVESALMCS), 131–151 (LLAAYMMVYYMGTFLGQLLVS), 157–177 (LLHVLPWVTGMILAGILPLLF), 204–224 (LGVNGCIISGIVLGSLYGLMP), 231–251 (GMANASIGFWMAVLVSAGILG), 270–290 (VQVFVVILGSIAMLTQAAMAP), 291–311 (ALFILGAAGFTLYPVAMAWAC), 325–345 (ALLLSYTVGSLLGPSFAAMLM), and 349–369 (SDNLLFIMIASVSFIYLLMLL).

It belongs to the major facilitator superfamily. YcaD (TC 2.A.1.26) family.

The protein resides in the cell inner membrane. This is an uncharacterized protein from Salmonella agona (strain SL483).